Here is a 375-residue protein sequence, read N- to C-terminus: 23S rRNA (uracil(747)-C(5))-methyltransferase RlmC (375 aa).

Cys3, Cys11, Cys14, and Cys87 together coordinate [4Fe-4S] cluster. The S-adenosyl-L-methionine site is built by Gln212, Phe241, Glu262, and Asn307. Cys334 functions as the Nucleophile in the catalytic mechanism.

The protein belongs to the class I-like SAM-binding methyltransferase superfamily. RNA M5U methyltransferase family. RlmC subfamily.

The enzyme catalyses uridine(747) in 23S rRNA + S-adenosyl-L-methionine = 5-methyluridine(747) in 23S rRNA + S-adenosyl-L-homocysteine + H(+). Its function is as follows. Catalyzes the formation of 5-methyl-uridine at position 747 (m5U747) in 23S rRNA. The chain is 23S rRNA (uracil(747)-C(5))-methyltransferase RlmC from Salmonella enteritidis PT4 (strain P125109).